Reading from the N-terminus, the 72-residue chain is DNA-directed RNA polymerase subunit omega (72 aa).

This sequence belongs to the RNA polymerase subunit omega family. As to quaternary structure, the RNAP catalytic core consists of 2 alpha, 1 beta, 1 beta' and 1 omega subunit. When a sigma factor is associated with the core the holoenzyme is formed, which can initiate transcription.

It catalyses the reaction RNA(n) + a ribonucleoside 5'-triphosphate = RNA(n+1) + diphosphate. In terms of biological role, promotes RNA polymerase assembly. Latches the N- and C-terminal regions of the beta' subunit thereby facilitating its interaction with the beta and alpha subunits. The polypeptide is DNA-directed RNA polymerase subunit omega (rpoZ) (Clostridium tetani (strain Massachusetts / E88)).